We begin with the raw amino-acid sequence, 68 residues long: uncharacterized protein (68 aa).

This is an uncharacterized protein from Haemophilus influenzae (strain ATCC 51907 / DSM 11121 / KW20 / Rd).